The sequence spans 377 residues: Histidinol-phosphate aminotransferase 2 (377 aa).

The disordered stretch occupies residues 17 to 44 (NLSPYVPGEQPQHDDLCKLNTNENPFPP). Lys-228 is subject to N6-(pyridoxal phosphate)lysine.

Belongs to the class-II pyridoxal-phosphate-dependent aminotransferase family. Histidinol-phosphate aminotransferase subfamily. In terms of assembly, homodimer. Pyridoxal 5'-phosphate is required as a cofactor.

It carries out the reaction L-histidinol phosphate + 2-oxoglutarate = 3-(imidazol-4-yl)-2-oxopropyl phosphate + L-glutamate. It participates in amino-acid biosynthesis; L-histidine biosynthesis; L-histidine from 5-phospho-alpha-D-ribose 1-diphosphate: step 7/9. In Psychrobacter arcticus (strain DSM 17307 / VKM B-2377 / 273-4), this protein is Histidinol-phosphate aminotransferase 2.